The chain runs to 286 residues: ATP synthase gamma chain (286 aa).

Belongs to the ATPase gamma chain family. As to quaternary structure, F-type ATPases have 2 components, CF(1) - the catalytic core - and CF(0) - the membrane proton channel. CF(1) has five subunits: alpha(3), beta(3), gamma(1), delta(1), epsilon(1). CF(0) has three main subunits: a, b and c.

The protein localises to the cell inner membrane. Produces ATP from ADP in the presence of a proton gradient across the membrane. The gamma chain is believed to be important in regulating ATPase activity and the flow of protons through the CF(0) complex. The chain is ATP synthase gamma chain from Shewanella woodyi (strain ATCC 51908 / MS32).